Here is a 394-residue protein sequence, read N- to C-terminus: Protein NDRG1 (394 aa).

Position 2 is an N-acetylserine (Ser-2). Residues Ser-2, Ser-319, and Ser-326 each carry the phosphoserine modification. The tract at residues 325 to 394 (RSRTASGSSV…AGPKSMEVSC (70 aa)) is disordered. Residues 327–339 (RTASGSSVTSLDG) are compositionally biased toward polar residues. Thr-328 carries the phosphothreonine; by SGK1 modification. 2 positions are modified to phosphoserine; by SGK1: Ser-330 and Ser-332. Ser-333 is subject to Phosphoserine. Position 335 is a phosphothreonine (Thr-335). Ser-336 is modified (phosphoserine). A run of 3 repeats spans residues 339–348 (GTRSRSHTSE), 349–358 (GTRSRSHTSE), and 359–368 (GTRSRSHTSE). The tract at residues 339–368 (GTRSRSHTSEGTRSRSHTSEGTRSRSHTSE) is 3 X 10 AA tandem repeats of G-[PST]-R-S-R-S-H-T-S-E. Thr-340 is subject to Phosphothreonine. The residue at position 342 (Ser-342) is a Phosphoserine. Residues 345 to 371 (HTSEGTRSRSHTSEGTRSRSHTSEGAH) show a composition bias toward basic and acidic residues. A Phosphothreonine; by SGK1 modification is found at Thr-346. Ser-352 bears the Phosphoserine mark. Phosphothreonine; by SGK1 is present on Thr-356. Ser-362 and Ser-364 each carry phosphoserine. Phosphothreonine is present on residues Thr-366 and Thr-375.

This sequence belongs to the NDRG family. In terms of assembly, interacts with RAB4A (membrane-bound form); the interaction involves NDRG1 in vesicular recycling ofCDH1. Interacts with APOA1, APOA2, PRA1 and RTN1. Post-translationally, under stress conditions, phosphorylated in the C-terminal on many serine and threonine residues. Phosphorylated in vitro by PKA. Phosphorylation enhanced by increased intracellular cAMP levels. Homocysteine induces dephosphorylation. Phosphorylation by SGK1 is cell cycle dependent.

It is found in the cytoplasm. The protein resides in the cytosol. The protein localises to the cytoskeleton. Its subcellular location is the microtubule organizing center. It localises to the centrosome. It is found in the nucleus. The protein resides in the cell membrane. Its function is as follows. Stress-responsive protein involved in hormone responses, cell growth, and differentiation. Acts as a tumor suppressor in many cell types. Necessary but not sufficient for p53/TP53-mediated caspase activation and apoptosis. Has a role in cell trafficking notably of the Schwann cell and is necessary for the maintenance and development of the peripheral nerve myelin sheath. Required for vesicular recycling of CDH1 and TF. May also function in lipid trafficking. Protects cells from spindle disruption damage. Functions in p53/TP53-dependent mitotic spindle checkpoint. Regulates microtubule dynamics and maintains euploidy. This Macaca fascicularis (Crab-eating macaque) protein is Protein NDRG1 (Ndrg1).